Reading from the N-terminus, the 237-residue chain is MAQPILGHGSLQPASAAGLASLELDSSMDQYVQIRIFKIIVIGDSNVGKTCLTFRFCGGTFPDKTEATIGVDFREKTVEIEGEKIKVQVWDTAGQERFRKSMVEHYYRNVHAVVFVYDVTKMTSFTNLKMWIQECNGHAVPPLVPKVLVGNKCDLREQIQVPSNLALKFADAHNMLLFETSAKDPKESQNVESIFMCLACRLKAQKSLLYRDAERQQGKVQKLEFSQEANGKASCPC.

The GTP site is built by Asn46, Val47, Gly48, Lys49, Thr50, Cys51, Thr65, and Thr68. Position 50 (Thr50) interacts with Mg(2+). A Switch 1 motif is present at residues 59–71 (GTFPDKTEATIGV). Mg(2+) contacts are provided by Thr68 and Asp91. The Switch 2 motif lies at 92 to 111 (TAGQERFRKSMVEHYYRNVH). GTP contacts are provided by Gly94, Asn151, Lys152, Asp154, Ala182, and Lys183. 2 S-geranylgeranyl cysteine lipidation sites follow: Cys235 and Cys237. A Cysteine methyl ester modification is found at Cys237.

The protein belongs to the small GTPase superfamily. Rab family. In terms of assembly, interacts with ATG16L1; the interaction is important for autophagosome formation. It depends on Mg(2+) as a cofactor. As to expression, expressed predominantly in brain. Weak expression in ovary.

Its subcellular location is the cell membrane. The enzyme catalyses GTP + H2O = GDP + phosphate + H(+). Regulated by guanine nucleotide exchange factors (GEFs) which promote the exchange of bound GDP for free GTP. Regulated by GTPase activating proteins (GAPs) which increase the GTP hydrolysis activity. Inhibited by GDP dissociation inhibitors (GDIs). In terms of biological role, the small GTPases Rab are key regulators of intracellular membrane trafficking, from the formation of transport vesicles to their fusion with membranes. Rabs cycle between an inactive GDP-bound form and an active GTP-bound form that is able to recruit to membranes different sets of downstream effectors directly responsible for vesicle formation, movement, tethering and fusion. Modulates autophagosome formation through interaction with ATG16L1. This Mus musculus (Mouse) protein is Ras-related protein Rab-33A.